Here is a 699-residue protein sequence, read N- to C-terminus: Elongation factor G (699 aa).

The region spanning 10–292 is the tr-type G domain; sequence DRTRNIGIMA…AVIDYLPSPT (283 aa). GTP-binding positions include 19–26, 90–94, and 144–147; these read AHIDAGKT, DTPGH, and NKMD.

The protein belongs to the TRAFAC class translation factor GTPase superfamily. Classic translation factor GTPase family. EF-G/EF-2 subfamily.

It localises to the cytoplasm. Its function is as follows. Catalyzes the GTP-dependent ribosomal translocation step during translation elongation. During this step, the ribosome changes from the pre-translocational (PRE) to the post-translocational (POST) state as the newly formed A-site-bound peptidyl-tRNA and P-site-bound deacylated tRNA move to the P and E sites, respectively. Catalyzes the coordinated movement of the two tRNA molecules, the mRNA and conformational changes in the ribosome. The sequence is that of Elongation factor G from Coxiella burnetii (strain Dugway 5J108-111).